A 475-amino-acid chain; its full sequence is Glycogen synthase (475 aa).

Position 15 (Lys-15) interacts with ADP-alpha-D-glucose.

This sequence belongs to the glycosyltransferase 1 family. Bacterial/plant glycogen synthase subfamily.

The catalysed reaction is [(1-&gt;4)-alpha-D-glucosyl](n) + ADP-alpha-D-glucose = [(1-&gt;4)-alpha-D-glucosyl](n+1) + ADP + H(+). Its pathway is glycan biosynthesis; glycogen biosynthesis. Synthesizes alpha-1,4-glucan chains using ADP-glucose. The chain is Glycogen synthase from Chlamydia caviae (strain ATCC VR-813 / DSM 19441 / 03DC25 / GPIC) (Chlamydophila caviae).